Consider the following 112-residue polypeptide: Omega-agatoxin-1A (112 aa).

Positions 1 to 19 are cleaved as a signal peptide; it reads MMKFVVFLACLFVAAHSFA. Residues 20–36 constitute a propeptide that is removed on maturation; sequence VEGEEEYFEAEVPELER. A propeptide spans 103 to 109 (glu-rich); that stretch reads RSEESER.

Belongs to the neurotoxin 04 (omega-agtx) family. 01 (type I omega-agtx) subfamily. As to quaternary structure, heterodimer of two subunits, a major chain and a minor chain, linked by a disulfide bond. In terms of processing, proteolytically processed to yield the major and the minor chains. In terms of tissue distribution, expressed by the venom gland.

The protein localises to the secreted. Omega-agatoxins are antagonists of voltage-gated calcium channels. They block insect neuromuscular transmission presynaptically. This toxin is a blocker of L-type calcium channels (Cav/CACNA1). The chain is Omega-agatoxin-1A from Agelenopsis aperta (North American funnel-web spider).